The following is a 212-amino-acid chain: Thiamine-phosphate synthase (212 aa).

4-amino-2-methyl-5-(diphosphooxymethyl)pyrimidine-binding positions include 39 to 43 and N71; that span reads QLREK. D72 and D91 together coordinate Mg(2+). S110 contacts 4-amino-2-methyl-5-(diphosphooxymethyl)pyrimidine. Residue 137–139 coordinates 2-[(2R,5Z)-2-carboxy-4-methylthiazol-5(2H)-ylidene]ethyl phosphate; sequence TPT. Position 140 (K140) interacts with 4-amino-2-methyl-5-(diphosphooxymethyl)pyrimidine. Residue G168 coordinates 2-[(2R,5Z)-2-carboxy-4-methylthiazol-5(2H)-ylidene]ethyl phosphate.

Belongs to the thiamine-phosphate synthase family. It depends on Mg(2+) as a cofactor.

It carries out the reaction 2-[(2R,5Z)-2-carboxy-4-methylthiazol-5(2H)-ylidene]ethyl phosphate + 4-amino-2-methyl-5-(diphosphooxymethyl)pyrimidine + 2 H(+) = thiamine phosphate + CO2 + diphosphate. The enzyme catalyses 2-(2-carboxy-4-methylthiazol-5-yl)ethyl phosphate + 4-amino-2-methyl-5-(diphosphooxymethyl)pyrimidine + 2 H(+) = thiamine phosphate + CO2 + diphosphate. The catalysed reaction is 4-methyl-5-(2-phosphooxyethyl)-thiazole + 4-amino-2-methyl-5-(diphosphooxymethyl)pyrimidine + H(+) = thiamine phosphate + diphosphate. Its pathway is cofactor biosynthesis; thiamine diphosphate biosynthesis; thiamine phosphate from 4-amino-2-methyl-5-diphosphomethylpyrimidine and 4-methyl-5-(2-phosphoethyl)-thiazole: step 1/1. Functionally, condenses 4-methyl-5-(beta-hydroxyethyl)thiazole monophosphate (THZ-P) and 2-methyl-4-amino-5-hydroxymethyl pyrimidine pyrophosphate (HMP-PP) to form thiamine monophosphate (TMP). The chain is Thiamine-phosphate synthase from Acidothermus cellulolyticus (strain ATCC 43068 / DSM 8971 / 11B).